A 152-amino-acid polypeptide reads, in one-letter code: Ribosome maturation factor RimP (152 aa).

It belongs to the RimP family.

Its subcellular location is the cytoplasm. Functionally, required for maturation of 30S ribosomal subunits. In Elusimicrobium minutum (strain Pei191), this protein is Ribosome maturation factor RimP.